We begin with the raw amino-acid sequence, 184 residues long: Protein GrpE (184 aa).

Residues 1-10 are compositionally biased toward basic and acidic residues; the sequence is MSQETEKDLE. The tract at residues 1-38 is disordered; it reads MSQETEKDLEQTQNEELVEEAQSDEKKDQEVDPVEAAQ.

This sequence belongs to the GrpE family. In terms of assembly, homodimer.

The protein resides in the cytoplasm. Participates actively in the response to hyperosmotic and heat shock by preventing the aggregation of stress-denatured proteins, in association with DnaK and GrpE. It is the nucleotide exchange factor for DnaK and may function as a thermosensor. Unfolded proteins bind initially to DnaJ; upon interaction with the DnaJ-bound protein, DnaK hydrolyzes its bound ATP, resulting in the formation of a stable complex. GrpE releases ADP from DnaK; ATP binding to DnaK triggers the release of the substrate protein, thus completing the reaction cycle. Several rounds of ATP-dependent interactions between DnaJ, DnaK and GrpE are required for fully efficient folding. This is Protein GrpE from Sulfurovum sp. (strain NBC37-1).